The chain runs to 495 residues: MASITNHKSDPLHFVLFPFMAQGHMIPMVDIARLLAQRGLTITIVTTPHNASRFKNVLNRAIESGLPINILHVKLPYQEVGLPEGLENIDCFDSMEHMIPFFKGVNMVEESVQKLFEEMSPRPSCIISDFCLPYTSKVAKKFNIPKILFHGMCCLCLLCMHVLRKNPKILENLKSDKEHFVVPYFPDKIELTRPQVPMDTYVPGELKEFMEDLVEADKTSYGVIVNTFQELEPAYVKDYKETRSGKAWSVGPVALCNKARIDKAERGNKSDIDQDECLKWLDSKEERSVLYVCLGSICNLPLAQLKELGLGLEESTRPFIWVIRGWDKNKQLVEWFSESGFEERIKDRGLLIKGWSPQMLILSHQSVGGFLTHCGWNSTLEGITAGLPLLTWPLFADQFCNEKLVVQVLNSGVRAGVEQPMKWGEEEKIGVLVDKEGVKKAVEELMGESDEANERRRRAKELGELAHKAVEEGGSSHSNITFLLQDIMQLAQSNN.

23-26 (GHMI) is a UDP-alpha-D-glucose binding site. H24 serves as the catalytic Proton acceptor. D129 (charge relay) is an active-site residue. UDP-alpha-D-glucose contacts are provided by residues 355–358 (WSPQ), 373–381 (HCGWNSTLE), and 397–398 (DQ).

This sequence belongs to the UDP-glycosyltransferase family.

Functionally, catalyzes the transfer of a glucose (Glc) moiety from UDP-Glc to the C-28 carboxylic group of oleanolate 3-O-beta-D-glucoside to form oleanolate 3,28-O-beta-D-diglucoside. The protein is UDP-glycosyltransferase 73C25 of Barbarea vulgaris (Yellow rocket).